The following is a 172-amino-acid chain: CD164 sialomucin-like 2 protein (172 aa).

The signal sequence occupies residues 1 to 29; that stretch reads MAAPGPRALRAALCGGCCCLLLCAQLVLA. Topologically, residues 30–137 are extracellular; that stretch reads GKGARGFGRG…PEDHSPGFDG (108 aa). 2 N-linked (GlcNAc...) asparagine glycosylation sites follow: Asn69 and Asn101. The tract at residues 108-132 is disordered; it reads ASHHHSTEEPKPSTTGSPPIPEDHS. Residues 138–158 traverse the membrane as a helical segment; the sequence is ASFIGGIVLVLSLQATAFFVL. Residues 159 to 172 lie on the Cytoplasmic side of the membrane; sequence RFLKAKDSTYQTLI.

This sequence belongs to the CD164 family.

Its subcellular location is the membrane. The protein is CD164 sialomucin-like 2 protein (Cd164l2) of Mus musculus (Mouse).